Reading from the N-terminus, the 283-residue chain is Phosphatidylserine decarboxylase proenzyme (283 aa).

Residues Asp-88, His-145, and Ser-248 each act as charge relay system; for autoendoproteolytic cleavage activity in the active site. Ser-248 (schiff-base intermediate with substrate; via pyruvic acid; for decarboxylase activity) is an active-site residue. Position 248 is a pyruvic acid (Ser); by autocatalysis (Ser-248).

This sequence belongs to the phosphatidylserine decarboxylase family. PSD-B subfamily. Prokaryotic type I sub-subfamily. As to quaternary structure, heterodimer of a large membrane-associated beta subunit and a small pyruvoyl-containing alpha subunit. It depends on pyruvate as a cofactor. Is synthesized initially as an inactive proenzyme. Formation of the active enzyme involves a self-maturation process in which the active site pyruvoyl group is generated from an internal serine residue via an autocatalytic post-translational modification. Two non-identical subunits are generated from the proenzyme in this reaction, and the pyruvate is formed at the N-terminus of the alpha chain, which is derived from the carboxyl end of the proenzyme. The autoendoproteolytic cleavage occurs by a canonical serine protease mechanism, in which the side chain hydroxyl group of the serine supplies its oxygen atom to form the C-terminus of the beta chain, while the remainder of the serine residue undergoes an oxidative deamination to produce ammonia and the pyruvoyl prosthetic group on the alpha chain. During this reaction, the Ser that is part of the protease active site of the proenzyme becomes the pyruvoyl prosthetic group, which constitutes an essential element of the active site of the mature decarboxylase.

The protein resides in the cell membrane. The enzyme catalyses a 1,2-diacyl-sn-glycero-3-phospho-L-serine + H(+) = a 1,2-diacyl-sn-glycero-3-phosphoethanolamine + CO2. It functions in the pathway phospholipid metabolism; phosphatidylethanolamine biosynthesis; phosphatidylethanolamine from CDP-diacylglycerol: step 2/2. Its function is as follows. Catalyzes the formation of phosphatidylethanolamine (PtdEtn) from phosphatidylserine (PtdSer). The polypeptide is Phosphatidylserine decarboxylase proenzyme (Methylibium petroleiphilum (strain ATCC BAA-1232 / LMG 22953 / PM1)).